The following is a 235-amino-acid chain: Ribosomal RNA small subunit methyltransferase G (235 aa).

Residues Gly75, Phe80, 126–127 (AE), and Arg145 each bind S-adenosyl-L-methionine.

It belongs to the methyltransferase superfamily. RNA methyltransferase RsmG family.

It is found in the cytoplasm. In terms of biological role, specifically methylates the N7 position of a guanine in 16S rRNA. The polypeptide is Ribosomal RNA small subunit methyltransferase G (Carboxydothermus hydrogenoformans (strain ATCC BAA-161 / DSM 6008 / Z-2901)).